Here is a 413-residue protein sequence, read N- to C-terminus: Branched-chain-amino-acid aminotransferase 3, chloroplastic (413 aa).

Residues 1–60 (MERAAILPSVNQNYLLCPSRAFSTRLHSSTRNLSPPSFASIKLQHSSSSVSSNGGISLTR) constitute a chloroplast transit peptide. Lys-259 carries the post-translational modification N6-(pyridoxal phosphate)lysine.

Belongs to the class-IV pyridoxal-phosphate-dependent aminotransferase family. It depends on pyridoxal 5'-phosphate as a cofactor. Expressed in the phloem cells.

The protein localises to the plastid. It localises to the chloroplast. It carries out the reaction L-leucine + 2-oxoglutarate = 4-methyl-2-oxopentanoate + L-glutamate. The catalysed reaction is L-isoleucine + 2-oxoglutarate = (S)-3-methyl-2-oxopentanoate + L-glutamate. The enzyme catalyses L-valine + 2-oxoglutarate = 3-methyl-2-oxobutanoate + L-glutamate. It catalyses the reaction a 2-oxocarboxylate + L-methionine = 4-methylsulfanyl-2-oxobutanoate + an L-alpha-amino acid. It functions in the pathway amino-acid biosynthesis; L-isoleucine biosynthesis; L-isoleucine from 2-oxobutanoate: step 4/4. It participates in amino-acid biosynthesis; L-leucine biosynthesis; L-leucine from 3-methyl-2-oxobutanoate: step 4/4. The protein operates within amino-acid biosynthesis; L-valine biosynthesis; L-valine from pyruvate: step 4/4. With respect to regulation, inhibited by Ser- or Thr-derived imine. Its function is as follows. Converts 2-oxo acids to branched-chain amino acids. Acts on leucine, isoleucine and valine. Also involved in methionine chain elongation cycle of aliphatic glucosinolate formation. Catalyzes the conversion of 5-methylthiopentyl-2-oxo and 6-methylthiohexyl-2-oxo acids to their respective Met derivatives, homomethionine and dihomo-methionine, respectively. This Arabidopsis thaliana (Mouse-ear cress) protein is Branched-chain-amino-acid aminotransferase 3, chloroplastic.